Here is an 808-residue protein sequence, read N- to C-terminus: Probable mannosyl-oligosaccharide glucosidase (808 aa).

Over 1-11 (MVSDMLGGNKR) the chain is Cytoplasmic. A helical; Signal-anchor for type II membrane protein transmembrane segment spans residues 12 to 31 (WILFGLLSFLLNCVLVSCSV). Topologically, residues 32–808 (EDIEKAANDS…LVVNIMSENY (777 aa)) are lumenal. Asn-39 is a glycosylation site (N-linked (GlcNAc...) asparagine). The active-site Proton donor is Asp-580. Catalysis depends on Glu-778, which acts as the Proton acceptor.

It belongs to the glycosyl hydrolase 63 family.

Its subcellular location is the endoplasmic reticulum membrane. The enzyme catalyses N(4)-(alpha-D-Glc-(1-&gt;2)-alpha-D-Glc-(1-&gt;3)-alpha-D-Glc-(1-&gt;3)-alpha-D-Man-(1-&gt;2)-alpha-D-Man-(1-&gt;2)-alpha-D-Man-(1-&gt;3)-[alpha-D-Man-(1-&gt;2)-alpha-D-Man-(1-&gt;3)-[alpha-D-Man-(1-&gt;2)-alpha-D-Man-(1-&gt;6)]-alpha-D-Man-(1-&gt;6)]-beta-D-Man-(1-&gt;4)-beta-D-GlcNAc-(1-&gt;4)-beta-D-GlcNAc)-L-asparaginyl-[protein] + H2O = N(4)-(alpha-D-Glc-(1-&gt;3)-alpha-D-Glc-(1-&gt;3)-alpha-D-Man-(1-&gt;2)-alpha-D-Man-(1-&gt;2)-alpha-D-Man-(1-&gt;3)-[alpha-D-Man-(1-&gt;2)-alpha-D-Man-(1-&gt;3)-[alpha-D-Man-(1-&gt;2)-alpha-D-Man-(1-&gt;6)]-alpha-D-Man-(1-&gt;6)]-beta-D-Man-(1-&gt;4)-beta-D-GlcNAc-(1-&gt;4)-beta-D-GlcNAc)-L-asparaginyl-[protein] + beta-D-glucose. In terms of biological role, cleaves the distal alpha 1,2-linked glucose residue from the Glc(3)Man(9)GlcNAc(2) oligosaccharide precursor highly specifically. The polypeptide is Probable mannosyl-oligosaccharide glucosidase (Schizosaccharomyces pombe (strain 972 / ATCC 24843) (Fission yeast)).